We begin with the raw amino-acid sequence, 203 residues long: Small ribosomal subunit protein uS4 (203 aa).

The interval 15–46 (LGENIWGRPKSSVNRRSYGPGQHGQRRKSKVS) is disordered. Positions 94-154 (QRLDMVVYRA…KKAKEMALIA (61 aa)) constitute an S4 RNA-binding domain.

The protein belongs to the universal ribosomal protein uS4 family. In terms of assembly, part of the 30S ribosomal subunit. Contacts protein S5. The interaction surface between S4 and S5 is involved in control of translational fidelity.

Functionally, one of the primary rRNA binding proteins, it binds directly to 16S rRNA where it nucleates assembly of the body of the 30S subunit. With S5 and S12 plays an important role in translational accuracy. This is Small ribosomal subunit protein uS4 from Novosphingobium aromaticivorans (strain ATCC 700278 / DSM 12444 / CCUG 56034 / CIP 105152 / NBRC 16084 / F199).